The chain runs to 188 residues: Large ribosomal subunit protein bL9 (188 aa).

Residues 149–170 are compositionally biased toward basic and acidic residues; that stretch reads RSEEEAERQARGEEIGVEKEEP. The disordered stretch occupies residues 149-188; the sequence is RSEEEAERQARGEEIGVEKEEPSGFVEEALEETVEAPAEA.

This sequence belongs to the bacterial ribosomal protein bL9 family.

Its function is as follows. Binds to the 23S rRNA. This Gluconacetobacter diazotrophicus (strain ATCC 49037 / DSM 5601 / CCUG 37298 / CIP 103539 / LMG 7603 / PAl5) protein is Large ribosomal subunit protein bL9.